Consider the following 477-residue polypeptide: Probable cytosolic Fe-S cluster assembly factor GM20417 (477 aa).

Positions 23, 68, 71, 74, 187, 243, 395, and 399 each coordinate [4Fe-4S] cluster.

The protein belongs to the NARF family.

Component of the cytosolic iron-sulfur (Fe/S) protein assembly machinery. Required for maturation of extramitochondrial Fe/S proteins. The protein is Probable cytosolic Fe-S cluster assembly factor GM20417 of Drosophila sechellia (Fruit fly).